Consider the following 193-residue polypeptide: Large ribosomal subunit protein bL21 (193 aa).

Belongs to the bacterial ribosomal protein bL21 family. In terms of assembly, part of the 50S ribosomal subunit. Contacts protein L20.

Its function is as follows. This protein binds to 23S rRNA in the presence of protein L20. In Ruegeria pomeroyi (strain ATCC 700808 / DSM 15171 / DSS-3) (Silicibacter pomeroyi), this protein is Large ribosomal subunit protein bL21.